The sequence spans 142 residues: Ribonuclease VapC25 (142 aa).

In terms of domain architecture, PINc spans 3-139 (LIDVNVLLAA…ARFASVRHIR (137 aa)). Mg(2+)-binding residues include D5 and D108.

This sequence belongs to the PINc/VapC protein family. Mg(2+) is required as a cofactor.

In terms of biological role, toxic component of a type II toxin-antitoxin (TA) system. An RNase. Upon expression in M.smegmatis inhibits colony formation. Its toxic effect is neutralized by coexpression with cognate antitoxin VapB25. This is Ribonuclease VapC25 from Mycobacterium tuberculosis (strain ATCC 25618 / H37Rv).